The following is an 83-amino-acid chain: Protein WFDC9 (83 aa).

Residues 1–24 (MKPWIIVLTVSAHGILVFLHVLGS) form the signal peptide.

It localises to the secreted. The polypeptide is Protein WFDC9 (Wfdc9) (Mus musculus (Mouse)).